The chain runs to 292 residues: Acetylglutamate kinase (292 aa).

Substrate-binding positions include 62-63 (GG), Arg-84, and Asn-188.

This sequence belongs to the acetylglutamate kinase family. ArgB subfamily.

The protein localises to the cytoplasm. The catalysed reaction is N-acetyl-L-glutamate + ATP = N-acetyl-L-glutamyl 5-phosphate + ADP. The protein operates within amino-acid biosynthesis; L-arginine biosynthesis; N(2)-acetyl-L-ornithine from L-glutamate: step 2/4. Catalyzes the ATP-dependent phosphorylation of N-acetyl-L-glutamate. The chain is Acetylglutamate kinase from Methanosarcina mazei (strain ATCC BAA-159 / DSM 3647 / Goe1 / Go1 / JCM 11833 / OCM 88) (Methanosarcina frisia).